The primary structure comprises 147 residues: Globin (147 aa).

Ser-2 bears the N-acetylserine mark. Residues 2–147 (SLSAAEADLA…IIDALKAAGK (146 aa)) enclose the Globin domain. Residue His-96 participates in heme b binding.

Belongs to the globin family. In terms of assembly, monomer.

The polypeptide is Globin (Aplysia limacina (Sea hare)).